Consider the following 569-residue polypeptide: MKKLWKKGLVAFLALTLIFQLIPGFASAADSRLKDGGEYQVQVNFYKDNTGKTTKESSEADKYIDHTATIKVENGQPYMYLTITNSTWWQTMAVSKNGTRPEKPAQADVYQDRYEDVQTVSTDAAKDTRVEKFKLSSLDDVIFSYMHIKVDAISYDHWYQVDLTIDPSTFKVISEPAVTTPVTLSDGIYTIPFVAKKANDDSNSSMQNYFNNPAWLKVKNGKKMVAMTVNDNKTVTALKTTLAGTLQDVKVVSEDKDANTRIVEFEVEDLNQPLAAHVNYEAPFNGSVYKGQADFRYVFDTAKATAASSYPGSDETPPVVNPGETNPPVTKPDPGTTNPPVTTPPTTPSKPAVVDPKNLLNNHTYSIDFDVFKDGTTETSMMESYVMKPALIKVENNQPYVYLTLTNSSWIKTFQYKVNGVWKDMEVVSGDINKNTRTVKYPVKDGTANTDVKTHVLIEDMPGFSYDHEYTVQVKLNAATIKDITGKDVTLKEPVKKDILNTGNVASNNNAGPKLAKPDFDDTNSVQKTASKTEKNAKTNDSSSMVWYITLFGASFLYLAYRLKRKRLS.

The first 28 residues, 1–28 (MKKLWKKGLVAFLALTLIFQLIPGFASA), serve as a signal peptide directing secretion. NEAT domains lie at 34-173 (KDGG…FKVI), 184-307 (LSDG…ATAA), and 360-484 (LNNH…IKDI). Residues 204-205 (SS), Y280, and Y289 each bind heme. Residues 307-357 (ASSYPGSDETPPVVNPGETNPPVTKPDPGTTNPPVTTPPTTPSKPAVVDPK) form a disordered region. Polar residues predominate over residues 502 to 511 (TGNVASNNNA). The interval 502–537 (TGNVASNNNAGPKLAKPDFDDTNSVQKTASKTEKNA) is disordered. Positions 536–540 (NAKTN) match the NXZTN sorting signal motif. The residue at position 539 (T539) is a Pentaglycyl murein peptidoglycan amidated threonine. Positions 540-569 (NDSSSMVWYITLFGASFLYLAYRLKRKRLS) are cleaved as a propeptide — removed by sortase B.

It localises to the cell surface. It is found in the secreted. The protein localises to the cell wall. Is overexpressed in mecA, clpC and clpP mutants, suggesting the protein level is controlled by MecA, ClpC and ClpP (at protein level). Its function is as follows. Acts as an extracellular and cell wall-bound hemophore; scavenges host heme and hemoglobin from the environment and also serves as a cell wall receptor for both. At low hemin (Hn) and hemoglobin (Hb) concentrations adsorbs Hn/Hb and presumably directs it to membrane transporters. Soluble Hbp2 can probably pass Hn/Hb to cell wall-anchored Hbp2, and both forms can accept Hn/Hb from Hbp1. May be involved in crossing the digestive barrier in infected animals. Binds host hemin. Binds host hemoglobin with affinity in the nanomolar range. This Listeria monocytogenes serovar 1/2a (strain ATCC BAA-679 / EGD-e) protein is Hemin/hemoglobin-binding protein 2.